The sequence spans 288 residues: Energy-coupling factor transporter ATP-binding protein EcfA2 (288 aa).

In terms of domain architecture, ABC transporter spans 3–245; sequence IEFKNVDYIY…PDWLKKHFLD (243 aa). Residue 40 to 47 coordinates ATP; that stretch reads GHTGSGKS.

It belongs to the ABC transporter superfamily. Energy-coupling factor EcfA family. As to quaternary structure, forms a stable energy-coupling factor (ECF) transporter complex composed of 2 membrane-embedded substrate-binding proteins (S component), 2 ATP-binding proteins (A component) and 2 transmembrane proteins (T component).

Its subcellular location is the cell membrane. ATP-binding (A) component of a common energy-coupling factor (ECF) ABC-transporter complex. Unlike classic ABC transporters this ECF transporter provides the energy necessary to transport a number of different substrates. This Lactobacillus gasseri (strain ATCC 33323 / DSM 20243 / BCRC 14619 / CIP 102991 / JCM 1131 / KCTC 3163 / NCIMB 11718 / NCTC 13722 / AM63) protein is Energy-coupling factor transporter ATP-binding protein EcfA2.